Consider the following 102-residue polypeptide: Protein RnfH (102 aa).

This sequence belongs to the UPF0125 (RnfH) family.

The protein is Protein RnfH of Haemophilus influenzae (strain PittEE).